Reading from the N-terminus, the 205-residue chain is Small ribosomal subunit protein mS26 (205 aa).

The N-terminal 27 residues, 1–27 (MLRALSRLGAGTPCRPRAPLVLPARGR), are a transit peptide targeting the mitochondrion.

This sequence belongs to the mitochondrion-specific ribosomal protein mS26 family. As to quaternary structure, component of the mitochondrial small ribosomal subunit (mt-SSU). Mature mammalian 55S mitochondrial ribosomes consist of a small (28S) and a large (39S) subunit. The 28S small subunit contains a 12S ribosomal RNA (12S mt-rRNA) and 30 different proteins. The 39S large subunit contains a 16S rRNA (16S mt-rRNA), a copy of mitochondrial valine transfer RNA (mt-tRNA(Val)), which plays an integral structural role, and 52 different proteins.

It localises to the mitochondrion. The sequence is that of Small ribosomal subunit protein mS26 (MRPS26) from Homo sapiens (Human).